Here is a 191-residue protein sequence, read N- to C-terminus: Large ribosomal subunit protein uL6 (191 aa).

Belongs to the universal ribosomal protein uL6 family. In terms of assembly, component of the large ribosomal subunit. Mature ribosomes consist of a small (40S) and a large (60S) subunit. The 40S subunit contains about 32 different proteins and 1 molecule of RNA (18S). The 60S subunit contains 45 different proteins and 3 molecules of RNA (25S, 5.8S and 5S).

The protein resides in the cytoplasm. Component of the ribosome, a large ribonucleoprotein complex responsible for the synthesis of proteins in the cell. The small ribosomal subunit (SSU) binds messenger RNAs (mRNAs) and translates the encoded message by selecting cognate aminoacyl-transfer RNA (tRNA) molecules. The large subunit (LSU) contains the ribosomal catalytic site termed the peptidyl transferase center (PTC), which catalyzes the formation of peptide bonds, thereby polymerizing the amino acids delivered by tRNAs into a polypeptide chain. The nascent polypeptides leave the ribosome through a tunnel in the LSU and interact with protein factors that function in enzymatic processing, targeting, and the membrane insertion of nascent chains at the exit of the ribosomal tunnel. The protein is Large ribosomal subunit protein uL6 of Candida albicans (strain SC5314 / ATCC MYA-2876) (Yeast).